Reading from the N-terminus, the 1072-residue chain is Isoleucine--tRNA ligase, cytoplasmic (1072 aa).

The 'HIGH' region signature appears at 47–57; that stretch reads PFATGTPHYGH. Lys486 is covalently cross-linked (Glycyl lysine isopeptide (Lys-Gly) (interchain with G-Cter in ubiquitin)). The short motif at 602–606 is the 'KMSKS' region element; sequence KMSKS. Lys605 is an ATP binding site. Ser829 and Ser1059 each carry phosphoserine.

This sequence belongs to the class-I aminoacyl-tRNA synthetase family.

Its subcellular location is the cytoplasm. It carries out the reaction tRNA(Ile) + L-isoleucine + ATP = L-isoleucyl-tRNA(Ile) + AMP + diphosphate. The protein is Isoleucine--tRNA ligase, cytoplasmic (ILS1) of Saccharomyces cerevisiae (strain ATCC 204508 / S288c) (Baker's yeast).